We begin with the raw amino-acid sequence, 306 residues long: Putative secretory carrier-associated membrane protein 1 (306 aa).

Residues 1 to 60 form a disordered region; that stretch reads MAGRYDSNPFEEDDVNPFSEQARGKAGGQPSYGGGAFYMPNPRNVPSMSSNSRLSPLPPE. Residues 1 to 141 lie on the Cytoplasmic side of the membrane; that stretch reads MAGRYDSNPF…EIPSHLQRMQ (141 aa). Residues 25–36 show a composition bias toward gly residues; sequence KAGGQPSYGGGA. The segment covering 44-54 has biased composition (polar residues); sequence NVPSMSSNSRL. Residues 72 to 109 adopt a coiled-coil conformation; it reads LDSSKDLKNREKELQAREAELNKREKELKRREEAAARA. The next 4 helical transmembrane spans lie at 142 to 162, 174 to 194, 209 to 229, and 257 to 277; these read YVAF…VIAV, IWLL…VLWY, FGLF…SAVA, and IFYF…IWVI. Topologically, residues 278–306 are cytoplasmic; that stretch reads QQVYMYFRGSGKAAEMKRDATRGAMRAAF.

It belongs to the SCAMP family.

It is found in the cell membrane. The protein resides in the cytoplasmic vesicle. Its subcellular location is the secretory vesicle membrane. In terms of biological role, probably involved in membrane trafficking. This Oryza sativa subsp. indica (Rice) protein is Putative secretory carrier-associated membrane protein 1 (SCAMP1).